A 1827-amino-acid chain; its full sequence is Phenolphthiocerol/phthiocerol polyketide synthase subunit C (1827 aa).

Positions 35–461 (CEPVAVVGIG…GTNAHVVVEQ (427 aa)) constitute a Ketosynthase family 3 (KS3) domain. Residues Cys-207, His-342, and His-383 each act as for beta-ketoacyl synthase activity in the active site. The acyltransferase stretch occupies residues 566-876 (VFVYSGQGSQ…LAAVGVAASE (311 aa)). Ser-654 (for malonyltransferase activity) is an active-site residue. The segment at 910 to 1037 (HPLLGAHIEM…AKVEQSPREC (128 aa)) is N-terminal hotdog fold. The tract at residues 910–1076 (HPLLGAHIEM…QHHGPAFAAL (167 aa)) is dehydratase. The 289-residue stretch at 910-1198 (HPLLGAHIEM…LRRVERRAVP (289 aa)) folds into the PKS/mFAS DH domain. The active-site Proton acceptor; for dehydratase activity is the His-942. The interval 1050–1198 (GTTVSPADFY…LRRVERRAVP (149 aa)) is C-terminal hotdog fold. Asp-1111 acts as the Proton donor; for dehydratase activity in catalysis. Residues 1439–1617 (ASYVVTGGLG…VINWGPWSEV (179 aa)) are beta-ketoacyl reductase. NADP(+) is bound at residue 1440-1485 (SYVVTGGLGGLGLVVARWLVDRGAGRVVLGGRSDPTDEQCNVLAEL). The 80-residue stretch at 1706-1785 (RAVTERMCAR…DLTADLMRQL (80 aa)) folds into the Carrier domain. Ser-1745 is subject to O-(pantetheine 4'-phosphoryl)serine.

The cofactor is NADP(+). Pantetheine 4'-phosphate serves as cofactor.

The catalysed reaction is icosanoyl-[(phenol)carboxyphthiodiolenone synthase] + 2 (S)-methylmalonyl-CoA + 3 malonyl-CoA + 5 NADPH + 10 H(+) = C32-carboxyphthiodiolenone-[(phenol)carboxyphthiodiolenone synthase] + 5 CO2 + 5 NADP(+) + 5 CoA + 2 H2O. It catalyses the reaction docosanoyl-[(phenol)carboxyphthiodiolenone synthase] + 2 (S)-methylmalonyl-CoA + 3 malonyl-CoA + 5 NADPH + 10 H(+) = C34-carboxyphthiodiolenone-[(phenol)carboxyphthiodiolenone synthase] + 5 CO2 + 5 NADP(+) + 5 CoA + 2 H2O. It carries out the reaction 17-(4-hydroxyphenyl)heptadecanoyl-[(phenol)carboxyphthiodiolenone synthase] + 2 (S)-methylmalonyl-CoA + 3 malonyl-CoA + 5 NADPH + 10 H(+) = C35-(phenol)carboxyphthiodiolenone-[(phenol)carboxyphthiodiolenone synthase] + 5 CO2 + 5 NADP(+) + 5 CoA + 2 H2O. The enzyme catalyses 19-(4-hydroxyphenyl)nonadecanoyl-[(phenol)carboxyphthiodiolenone synthase] + 2 (S)-methylmalonyl-CoA + 3 malonyl-CoA + 5 NADPH + 10 H(+) = C37-(phenol)carboxyphthiodiolenone-[(phenol)carboxyphthiodiolenone synthase] + 5 CO2 + 5 NADP(+) + 5 CoA + 2 H2O. Its pathway is lipid metabolism; fatty acid biosynthesis. Its function is as follows. Part of the PpsABCDE complex involved in the biosynthesis of the lipid core common to phthiocerols and phenolphthiocerols by successive additions of malonyl-CoA or methylmalonyl-CoA extender units. PpsA can accept as substrate the activated forms of either icosanoyl (C20), docosanoyl (C22) or lignoceroyl (C24) groups from FadD26, or a (4-hydroxyphenyl)-C17 or (4-hydroxyphenyl)-C19 fatty acyl from FadD29. PpsA initiates the biosynthesis and extends its substrate using a malonyl-CoA extender unit. The PpsB and PpsC proteins add the second and third malonyl-CoA extender units. PpsD adds an (R)-methylmalonyl unit and PpsE adds a second (R)-methylmalonyl unit. The incorporation of the methylmalonyl units results in formation of two branched methyl groups in the elongated product. This Mycobacterium bovis (strain ATCC BAA-935 / AF2122/97) protein is Phenolphthiocerol/phthiocerol polyketide synthase subunit C (ppsD).